Consider the following 498-residue polypeptide: ATP synthase subunit alpha 1 (498 aa).

Belongs to the ATPase alpha/beta chains family. In terms of assembly, F-type ATPases have 2 components, CF(1) - the catalytic core - and CF(0) - the membrane proton channel. CF(1) has five subunits: alpha(3), beta(3), gamma(1), delta(1), epsilon(1). CF(0) has three main subunits: a(1), b(2) and c(9-12). The alpha and beta chains form an alternating ring which encloses part of the gamma chain. CF(1) is attached to CF(0) by a central stalk formed by the gamma and epsilon chains, while a peripheral stalk is formed by the delta and b chains.

It is found in the cell membrane. The enzyme catalyses ATP + H2O + 4 H(+)(in) = ADP + phosphate + 5 H(+)(out). Functionally, produces ATP from ADP in the presence of a proton gradient across the membrane. The alpha chain is a regulatory subunit. The chain is ATP synthase subunit alpha 1 from Listeria monocytogenes serotype 4b (strain F2365).